Here is a 159-residue protein sequence, read N- to C-terminus: 3-hydroxyacyl-[acyl-carrier-protein] dehydratase FabZ (159 aa).

Residue histidine 59 is part of the active site.

This sequence belongs to the thioester dehydratase family. FabZ subfamily.

The protein resides in the cytoplasm. It carries out the reaction a (3R)-hydroxyacyl-[ACP] = a (2E)-enoyl-[ACP] + H2O. In terms of biological role, involved in unsaturated fatty acids biosynthesis. Catalyzes the dehydration of short chain beta-hydroxyacyl-ACPs and long chain saturated and unsaturated beta-hydroxyacyl-ACPs. The protein is 3-hydroxyacyl-[acyl-carrier-protein] dehydratase FabZ of Caulobacter vibrioides (strain ATCC 19089 / CIP 103742 / CB 15) (Caulobacter crescentus).